Consider the following 142-residue polypeptide: Large ribosomal subunit protein bL21 (142 aa).

A compositionally biased stretch (basic residues) spans 74–84; sequence RRRQNSKRTRG. Residues 74-142 form a disordered region; that stretch reads RRRQNSKRTR…KAAAKAESAE (69 aa). The span at 107–125 shows a compositional bias: basic and acidic residues; sequence KAAEKKAPKADAAEGEAAK. Residues 126 to 135 show a composition bias toward basic residues; that stretch reads PKKAAPKKAA.

This sequence belongs to the bacterial ribosomal protein bL21 family. As to quaternary structure, part of the 50S ribosomal subunit. Contacts protein L20.

Functionally, this protein binds to 23S rRNA in the presence of protein L20. The chain is Large ribosomal subunit protein bL21 from Brucella melitensis biotype 2 (strain ATCC 23457).